The primary structure comprises 966 residues: Phosphoenolpyruvate carboxylase, housekeeping isozyme (966 aa).

The residue at position 11 (serine 11) is a Phosphoserine. Active-site residues include histidine 172 and lysine 601.

The protein belongs to the PEPCase type 1 family. In terms of assembly, homotetramer. Requires Mg(2+) as cofactor.

The protein localises to the cytoplasm. It catalyses the reaction oxaloacetate + phosphate = phosphoenolpyruvate + hydrogencarbonate. Its activity is regulated as follows. By light-reversible phosphorylation. In terms of biological role, through the carboxylation of phosphoenolpyruvate (PEP) it forms oxaloacetate, a four-carbon dicarboxylic acid source for the tricarboxylic acid cycle. This Saccharum hybrid (Sugarcane) protein is Phosphoenolpyruvate carboxylase, housekeeping isozyme.